A 590-amino-acid chain; its full sequence is Aspartate--tRNA(Asp/Asn) ligase (590 aa).

E175 is an L-aspartate binding site. Positions Q199 to K202 are aspartate. Residues R221 and H450 each coordinate L-aspartate. R221–E223 serves as a coordination point for ATP. E484 contacts ATP. R491 is a binding site for L-aspartate. Residue G536–R539 coordinates ATP.

The protein belongs to the class-II aminoacyl-tRNA synthetase family. Type 1 subfamily. As to quaternary structure, homodimer.

The protein resides in the cytoplasm. It catalyses the reaction tRNA(Asx) + L-aspartate + ATP = L-aspartyl-tRNA(Asx) + AMP + diphosphate. Functionally, aspartyl-tRNA synthetase with relaxed tRNA specificity since it is able to aspartylate not only its cognate tRNA(Asp) but also tRNA(Asn). Reaction proceeds in two steps: L-aspartate is first activated by ATP to form Asp-AMP and then transferred to the acceptor end of tRNA(Asp/Asn). The sequence is that of Aspartate--tRNA(Asp/Asn) ligase from Azorhizobium caulinodans (strain ATCC 43989 / DSM 5975 / JCM 20966 / LMG 6465 / NBRC 14845 / NCIMB 13405 / ORS 571).